Consider the following 381-residue polypeptide: Deoxyguanosinetriphosphate triphosphohydrolase-like protein (381 aa).

One can recognise an HD domain in the interval R76–T203.

Belongs to the dGTPase family. Type 2 subfamily.

The protein is Deoxyguanosinetriphosphate triphosphohydrolase-like protein of Leptospira borgpetersenii serovar Hardjo-bovis (strain JB197).